A 565-amino-acid polypeptide reads, in one-letter code: Zinc finger protein 143 (565 aa).

7 consecutive C2H2-type zinc fingers follow at residues 230 to 254 (FRCD…ERSH), 260 to 284 (YQCD…VRTH), 290 to 314 (YRCS…VRTH), 320 to 344 (FKCP…IRTH), 350 to 374 (YYCS…VRIH), 380 to 404 (YVCT…HVVH), and 410 to 433 (YNCN…RTAH).

Belongs to the GLI C2H2-type zinc-finger protein family.

It is found in the nucleus. Transcriptional activator. Activates the gene for selenocysteine tRNA (tRNAsec). Binds to the activator element (AE) motif of the selenocysteine tRNA gene promoter. The sequence is that of Zinc finger protein 143 (znf143) from Xenopus laevis (African clawed frog).